The primary structure comprises 324 residues: Putative HTH-type transcriptional regulatory protein UNCMA_15260 (324 aa).

An HTH cro/C1-type domain is found at 132-189 (LRSLREAKNISLGELAMALGVSRRTISKYESGMNATIEAALKLEEILDAPIACPVNMI). Positions 143–162 (LGELAMALGVSRRTISKYES) form a DNA-binding region, H-T-H motif.

This Methanocella arvoryzae (strain DSM 22066 / NBRC 105507 / MRE50) protein is Putative HTH-type transcriptional regulatory protein UNCMA_15260.